A 309-amino-acid polypeptide reads, in one-letter code: Probable manganese-dependent inorganic pyrophosphatase (309 aa).

Positions 9, 13, 15, 75, 97, and 149 each coordinate Mn(2+).

The protein belongs to the PPase class C family. The cofactor is Mn(2+).

The protein resides in the cytoplasm. It catalyses the reaction diphosphate + H2O = 2 phosphate + H(+). This Bacillus anthracis (strain CDC 684 / NRRL 3495) protein is Probable manganese-dependent inorganic pyrophosphatase.